The primary structure comprises 526 residues: Vang-like protein 1 (526 aa).

Residues 1–15 are compositionally biased toward low complexity; sequence MDTESTYSGYSYYSS. The disordered stretch occupies residues 1–87; sequence MDTESTYSGY…TTAITGTSEH (87 aa). At 1-114 the chain is on the cytoplasmic side; that stretch reads MDTESTYSGY…VGLDCKRYLG (114 aa). Over residues 75–87 the composition is skewed to polar residues; it reads GETTTAITGTSEH. Phosphoserine occurs at positions 88 and 90. A helical transmembrane segment spans residues 115–135; the sequence is LTVASFLGLLVFLTPIAFILL. Residues 136 to 153 are Extracellular-facing; it reads PQILWREELKPCGAICEG. Residues 154-174 traverse the membrane as a helical segment; sequence LLISVSFKLLILLIGTWALFF. Over 175–184 the chain is Cytoplasmic; that stretch reads RKQRADVPRV. The chain crosses the membrane as a helical span at residues 185–205; it reads FVFRALLLVLIFLFVVSYWLF. At 206–224 the chain is on the extracellular side; that stretch reads YGVRILDSRDQNYKDIVQY. A helical transmembrane segment spans residues 225–245; it reads AVSLVDALLFIHYLAIVLLEL. Residues 246–526 are Cytoplasmic-facing; it reads RQLQPMFTLQ…VLRLQSETSV (281 aa).

This sequence belongs to the Vang family. As to quaternary structure, heterodimer with Vangl2. Interacts through its C-terminal region with the N-terminal half of DVL1, DVL2 and DVL3. The PDZ domain of DVL1, DVL2 and DVL3 is required for the interaction.

The protein resides in the cell membrane. This is Vang-like protein 1 (Vangl1) from Mus musculus (Mouse).